The following is a 496-amino-acid chain: Ankyrin repeat domain-containing protein 53 (496 aa).

Low complexity predominate over residues 1–15; sequence MASAGSTARRAGSGS. The segment at 1–66 is disordered; the sequence is MASAGSTARR…RPSEESDQTT (66 aa). The segment covering 51 to 60 has biased composition (basic and acidic residues); the sequence is AESKQPRPSE. 3 ANK repeats span residues 105-135, 139-172, and 176-205; these read KGFT…PVNL, NSQT…ALNA, and NGCT…NVHA. The segment at 292–320 is disordered; it reads LVSNTKQARATALSKTPEQRGSQCSSSFH.

Interacts with PSRC1; recruited by PSRC1 to the spindle during mitosis. Post-translationally, phosphorylated during mitosis.

The protein resides in the cytoplasm. The protein localises to the cytoskeleton. It is found in the spindle. Its subcellular location is the spindle pole. In terms of biological role, required for normal progression through mitosis. Involved in chromosome alignment and cytokinesis via regulation of microtubules polymerization. This Macaca fascicularis (Crab-eating macaque) protein is Ankyrin repeat domain-containing protein 53 (ANKRD53).